The following is a 286-amino-acid chain: Polyamine aminopropyltransferase (286 aa).

In terms of domain architecture, PABS spans asparagine 9–isoleucine 242. Glutamine 36 serves as a coordination point for S-methyl-5'-thioadenosine. Spermidine contacts are provided by histidine 67 and aspartate 91. S-methyl-5'-thioadenosine is bound by residues glutamate 111 and asparagine 143–glycine 144. The active-site Proton acceptor is the aspartate 162. Proline 169 serves as a coordination point for S-methyl-5'-thioadenosine.

Belongs to the spermidine/spermine synthase family. In terms of assembly, homodimer or homotetramer.

The protein resides in the cytoplasm. The enzyme catalyses S-adenosyl 3-(methylsulfanyl)propylamine + putrescine = S-methyl-5'-thioadenosine + spermidine + H(+). The protein operates within amine and polyamine biosynthesis; spermidine biosynthesis; spermidine from putrescine: step 1/1. Its function is as follows. Catalyzes the irreversible transfer of a propylamine group from the amino donor S-adenosylmethioninamine (decarboxy-AdoMet) to putrescine (1,4-diaminobutane) to yield spermidine. This Prochlorococcus marinus (strain MIT 9313) protein is Polyamine aminopropyltransferase.